Consider the following 334-residue polypeptide: 3-dehydroquinate synthase (334 aa).

It belongs to the archaeal-type DHQ synthase family.

The enzyme catalyses 2-amino-2,3,7-trideoxy-D-lyxo-hept-6-ulosonate + NAD(+) + H2O = 3-dehydroquinate + NH4(+) + NADH + H(+). Catalyzes the oxidative deamination and cyclization of 2-amino-3,7-dideoxy-D-threo-hept-6-ulosonic acid (ADH) to yield 3-dehydroquinate (DHQ), which is fed into the canonical shikimic pathway of aromatic amino acid biosynthesis. This is 3-dehydroquinate synthase from Korarchaeum cryptofilum (strain OPF8).